Reading from the N-terminus, the 619-residue chain is MVFKRKLDCLSVGFDFPNIPRAPRSCRRKVLNKRIDHDDDNTQICAIDLLALAGKILQESESSSASSNAFEEIKQEKVENCKTIKSESSDQGNSVSKPTYDISTEKCVVNSCFSFPDSDGVLERTPMSDYKKIHGLMDVGCENKNVNNGFEQGEATDRVGDGGLVTDTCNLEDATALGLQFPKSVCVGGDLKSPSTLDMTPNGSYARHGNHTNLGRKDDDEKFYSYHKLSNKFKSYRSPTIRRIRKSMSSKYWKQVPKDFGYSRADVGVKTLYRKRKSCYGYNAWQREIIYKRRRSPDRSSVVTSDGGLSSGSVSKLPKKGDTVKLSIKSFRIPELFIEVPETATVGSLKRTVMEAVSVLLSGGIRVGVLMHGKKVRDERKTLSQTGISCDENLDNLGFTLEPSPSKVPLPLCSEDPAVPTDPTSLSERSAASPMLDSGIPHADDVIDSRNIVDSNLELVPYQGDISVDEPSSDSKELVPLPELEVKALAIVPLNQKPKRTELAQRRTRRPFSVTEVEALVQAVEELGTGRWRDVKLRAFEDADHRTYVDLKDKWKTLVHTASISPQQRRGEPVPQELLDRVLRAYGYWSQHQGKHQARGASKDPDMNRGGAFESGVSV.

In terms of domain architecture, Ubiquitin-like spans 324-403 (VKLSIKSFRI…LDNLGFTLEP (80 aa)). The region spanning 504–563 (AQRRTRRPFSVTEVEALVQAVEELGTGRWRDVKLRAFEDADHRTYVDLKDKWKTLVHTAS) is the HTH myb-type domain. The segment at residues 532–559 (WRDVKLRAFEDADHRTYVDLKDKWKTLV) is a DNA-binding region (H-T-H motif). Positions 593-619 (QGKHQARGASKDPDMNRGGAFESGVSV) are disordered.

Homodimer and heterodimer with TRP1. In terms of tissue distribution, expressed ubiquitously. Highest expression in flowers and roots.

Its subcellular location is the nucleus. In terms of biological role, binds specifically to the plant telomeric double-stranded DNA sequences. At least 2 repeats of telomeric sequences are required for binding. Induces DNA bending. In Arabidopsis thaliana (Mouse-ear cress), this protein is Telomere repeat-binding protein 3 (TRP3).